A 147-amino-acid polypeptide reads, in one-letter code: Large ribosomal subunit protein bL9 (147 aa).

This sequence belongs to the bacterial ribosomal protein bL9 family.

In terms of biological role, binds to the 23S rRNA. In Helicobacter hepaticus (strain ATCC 51449 / 3B1), this protein is Large ribosomal subunit protein bL9.